The following is a 232-amino-acid chain: Esterase YpfH (232 aa).

Residues Ser111, Asp159, and His191 each act as charge relay system in the active site.

The protein belongs to the AB hydrolase superfamily. AB hydrolase 2 family.

Its function is as follows. Displays esterase activity toward palmitoyl-CoA and pNP-butyrate. This is Esterase YpfH (ypfH) from Escherichia coli (strain K12).